Here is a 193-residue protein sequence, read N- to C-terminus: Thymidine kinase (193 aa).

Residues 9–16 (STMNAGKS) and 87–90 (DEAN) contribute to the ATP site. E88 functions as the Proton acceptor in the catalytic mechanism. Residues C145, C147, C182, and H185 each contribute to the Zn(2+) site.

It belongs to the thymidine kinase family. In terms of assembly, homotetramer.

It is found in the cytoplasm. It carries out the reaction thymidine + ATP = dTMP + ADP + H(+). The chain is Thymidine kinase from Agrobacterium fabrum (strain C58 / ATCC 33970) (Agrobacterium tumefaciens (strain C58)).